Here is a 516-residue protein sequence, read N- to C-terminus: ADP-ribosylation factor GTPase-activating protein 3 (516 aa).

One can recognise an Arf-GAP domain in the interval 10–126; the sequence is LTIFKRLRSV…IKSLASQATR (117 aa). Residues 25-48 form a C4-type zinc finger; it reads CFDCGAKNPSWASITYGVFLCIDC. The tract at residues 170-199 is disordered; it reads AEPSSLTSRPVETTLENNEGGQEQGPSVEG. Over residues 173-194 the composition is skewed to polar residues; that stretch reads SSLTSRPVETTLENNEGGQEQG. A Phosphoserine modification is found at Ser-231. A coiled-coil region spans residues 243–264; the sequence is NEIEKQAQAADKMKEQEDLAKA. Ser-270, Ser-274, Ser-331, and Ser-370 each carry phosphoserine. Positions 392–414 are disordered; it reads KTTGYSDRPTARRKPDYEPVENT. A phosphoserine mark is found at Ser-428, Ser-451, Ser-453, Ser-455, Ser-457, and Ser-458.

It is found in the cytoplasm. The protein localises to the golgi apparatus membrane. Its activity is regulated as follows. GAP activity stimulated by phosphatidylinositol 4,5-bisphosphate (PIP2). In terms of biological role, GTPase-activating protein (GAP) for ADP ribosylation factor 1 (ARF1). Hydrolysis of ARF1-bound GTP may lead to dissociation of coatomer from Golgi-derived membranes to allow fusion with target membranes. The protein is ADP-ribosylation factor GTPase-activating protein 3 of Macaca fascicularis (Crab-eating macaque).